The following is a 196-amino-acid chain: CMRF35-like molecule 2 (196 aa).

An N-terminal signal peptide occupies residues 1–17; it reads MRLCAGLLLLCFQGCLS. Positions 18 to 122 constitute an Ig-like V-type domain; it reads LTGPGSVSGY…DSWSRDPSVS (105 aa). Topologically, residues 18–171 are extracellular; that stretch reads LTGPGSVSGY…QLWSLLSSIQ (154 aa). Cys-36 and Cys-104 form a disulfide bridge. N-linked (GlcNAc...) asparagine glycosylation occurs at Asn-84. A helical transmembrane segment spans residues 172 to 192; it reads FQVLVFLKLPLFLSMLCAIFW. At 193–196 the chain is on the cytoplasmic side; it reads VNRL.

This sequence belongs to the CD300 family. In terms of assembly, interacts with TYROBP.

The protein localises to the cell membrane. In terms of biological role, probably acts as an activating receptor. This chain is CMRF35-like molecule 2 (Cd300e), found in Mus musculus (Mouse).